A 147-amino-acid polypeptide reads, in one-letter code: Urease accessory protein UreE (147 aa).

It belongs to the UreE family.

It is found in the cytoplasm. Functionally, involved in urease metallocenter assembly. Binds nickel. Probably functions as a nickel donor during metallocenter assembly. The chain is Urease accessory protein UreE from Nostoc sp. (strain PCC 7120 / SAG 25.82 / UTEX 2576).